The primary structure comprises 101 residues: Gamma-secretase subunit PEN-2 (101 aa).

Over 1–17 the chain is Cytoplasmic; it reads MNLERVSNEEKLNLCRK. An intramembrane region (helical) is located at residues 18–36; sequence YYLGGFAFLPFLWLVNIFW. The Cytoplasmic segment spans residues 37–57; sequence FFKEAFFAPAYTEQSQIKGYV. The chain crosses the membrane as a helical span at residues 58–78; sequence WRSAVGFLFWVIVLTTWITIF. Residues 79–101 are Lumenal-facing; it reads QIYRPRWGALGDYLSFTIPLGTP.

The protein belongs to the PEN-2 family. As to quaternary structure, the functional gamma-secretase complex is composed of at least four polypeptides: a presenilin homodimer (PSEN1 or PSEN2), nicastrin (NCSTN), APH1 (APH1A or APH1B) and PSENEN.

It is found in the endoplasmic reticulum membrane. The protein localises to the golgi apparatus. The protein resides in the golgi stack membrane. It localises to the cell membrane. Its subcellular location is the membrane. Functionally, essential subunit of the gamma-secretase complex, an endoprotease complex that catalyzes the intramembrane cleavage of integral membrane proteins such as Notch receptors and APP (amyloid-beta precursor protein). The gamma-secretase complex plays a role in Notch and Wnt signaling cascades and regulation of downstream processes via its role in processing key regulatory proteins, and by regulating cytosolic CTNNB1 levels. PSENEN modulates both endoproteolysis of presenilin and gamma-secretase activity. This chain is Gamma-secretase subunit PEN-2 (Psenen), found in Rattus norvegicus (Rat).